Here is a 395-residue protein sequence, read N- to C-terminus: F-box/kelch-repeat protein At4g39570 (395 aa).

Positions 1 to 25 (MSSPERKRKRVTSTKNPSVKKKKKI) are enriched in basic residues. The disordered stretch occupies residues 1 to 29 (MSSPERKRKRVTSTKNPSVKKKKKISPVP). One can recognise an F-box domain in the interval 29–75 (PTPIPSLPDDLLVSIFARVSRLYYPILSLVSKSFRSLLRSPELYETR). Kelch repeat units lie at residues 150 to 197 (DIYF…VIDG) and 198 to 246 (KIYV…RSAY).

The sequence is that of F-box/kelch-repeat protein At4g39570 from Arabidopsis thaliana (Mouse-ear cress).